Reading from the N-terminus, the 536-residue chain is Light-independent protochlorophyllide reductase subunit B (536 aa).

D36 contributes to the [4Fe-4S] cluster binding site. The Proton donor role is filled by D274. 409–410 (GL) is a binding site for substrate. A disordered region spans residues 426–448 (DEAGPSHHGGKAVPASAPRADEA).

This sequence belongs to the ChlB/BchB/BchZ family. Protochlorophyllide reductase is composed of three subunits; BchL, BchN and BchB. Forms a heterotetramer of two BchB and two BchN subunits. It depends on [4Fe-4S] cluster as a cofactor.

The catalysed reaction is chlorophyllide a + oxidized 2[4Fe-4S]-[ferredoxin] + 2 ADP + 2 phosphate = protochlorophyllide a + reduced 2[4Fe-4S]-[ferredoxin] + 2 ATP + 2 H2O. Its pathway is porphyrin-containing compound metabolism; bacteriochlorophyll biosynthesis (light-independent). Functionally, component of the dark-operative protochlorophyllide reductase (DPOR) that uses Mg-ATP and reduced ferredoxin to reduce ring D of protochlorophyllide (Pchlide) to form chlorophyllide a (Chlide). This reaction is light-independent. The NB-protein (BchN-BchB) is the catalytic component of the complex. The sequence is that of Light-independent protochlorophyllide reductase subunit B from Cereibacter sphaeroides (strain KD131 / KCTC 12085) (Rhodobacter sphaeroides).